We begin with the raw amino-acid sequence, 186 residues long: Thioredoxin M2, chloroplastic (186 aa).

The N-terminal 72 residues, 1-72, are a transit peptide targeting the chloroplast; the sequence is MAAFTCTSRP…RVSRLRRAVV (72 aa). Positions 73–186 constitute a Thioredoxin domain; the sequence is CEAQETTTDI…LTSSLDKFLP (114 aa). Catalysis depends on nucleophile residues C110 and C113. C110 and C113 are joined by a disulfide.

It belongs to the thioredoxin family. Plant M-type subfamily. Interacts with G6PD1 and G6PD4. Interacts with PGL3.

It is found in the plastid. The protein resides in the chloroplast stroma. In terms of biological role, thiol-disulfide oxidoreductase that may participate in various redox reactions. May activate NADP-malate dehydrogenase. This Arabidopsis thaliana (Mouse-ear cress) protein is Thioredoxin M2, chloroplastic.